Here is a 401-residue protein sequence, read N- to C-terminus: Nicotinate phosphoribosyltransferase (401 aa).

H221 is modified (phosphohistidine; by autocatalysis).

This sequence belongs to the NAPRTase family. In terms of processing, transiently phosphorylated on a His residue during the reaction cycle. Phosphorylation strongly increases the affinity for substrates and increases the rate of nicotinate D-ribonucleotide production. Dephosphorylation regenerates the low-affinity form of the enzyme, leading to product release.

It catalyses the reaction nicotinate + 5-phospho-alpha-D-ribose 1-diphosphate + ATP + H2O = nicotinate beta-D-ribonucleotide + ADP + phosphate + diphosphate. It participates in cofactor biosynthesis; NAD(+) biosynthesis; nicotinate D-ribonucleotide from nicotinate: step 1/1. Functionally, catalyzes the synthesis of beta-nicotinate D-ribonucleotide from nicotinate and 5-phospho-D-ribose 1-phosphate at the expense of ATP. The polypeptide is Nicotinate phosphoribosyltransferase (Edwardsiella ictaluri (strain 93-146)).